The following is a 148-amino-acid chain: Lysozyme-like protein 2 (148 aa).

An N-terminal signal peptide occupies residues M1 to S19. The 129-residue stretch at K20–S148 folds into the C-type lysozyme domain. Cystine bridges form between C25/C145, C49/C133, C83/C98, and C94/C112. E54 is an active-site residue. N-linked (GlcNAc...) asparagine glycosylation is present at N58. D71 is an active-site residue.

The protein belongs to the glycosyl hydrolase 22 family. As to quaternary structure, monomer. Expressed in testis, epididymis and placenta.

Its subcellular location is the secreted. The enzyme catalyses Hydrolysis of (1-&gt;4)-beta-linkages between N-acetylmuramic acid and N-acetyl-D-glucosamine residues in a peptidoglycan and between N-acetyl-D-glucosamine residues in chitodextrins.. This chain is Lysozyme-like protein 2 (LYZL2), found in Homo sapiens (Human).